A 141-amino-acid chain; its full sequence is Hemoglobin subunit alpha-D (141 aa).

Residues 1–141 (MLTADDKKLL…VAAVLAEKYR (141 aa)) form the Globin domain. Positions 58 and 87 each coordinate heme b.

Belongs to the globin family. As to quaternary structure, heterotetramer of two alpha-D chains and two beta chains. In terms of tissue distribution, red blood cells.

Its function is as follows. Involved in oxygen transport from the lung to the various peripheral tissues. This is Hemoglobin subunit alpha-D (HBAD) from Chloephaga melanoptera (Andean goose).